The primary structure comprises 256 residues: DNA repair protein RecO (256 aa).

It belongs to the RecO family.

Involved in DNA repair and RecF pathway recombination. The protein is DNA repair protein RecO of Nocardia farcinica (strain IFM 10152).